A 137-amino-acid chain; its full sequence is Small ribosomal subunit protein bS6 (137 aa).

This sequence belongs to the bacterial ribosomal protein bS6 family.

Binds together with bS18 to 16S ribosomal RNA. This Mycoplasma mycoides subsp. mycoides SC (strain CCUG 32753 / NCTC 10114 / PG1) protein is Small ribosomal subunit protein bS6.